We begin with the raw amino-acid sequence, 125 residues long: Small ribosomal subunit protein uS13 (125 aa).

This sequence belongs to the universal ribosomal protein uS13 family. Part of the 30S ribosomal subunit. Forms a loose heterodimer with protein S19. Forms two bridges to the 50S subunit in the 70S ribosome.

In terms of biological role, located at the top of the head of the 30S subunit, it contacts several helices of the 16S rRNA. In the 70S ribosome it contacts the 23S rRNA (bridge B1a) and protein L5 of the 50S subunit (bridge B1b), connecting the 2 subunits; these bridges are implicated in subunit movement. Contacts the tRNAs in the A and P-sites. The protein is Small ribosomal subunit protein uS13 of Rickettsia felis (strain ATCC VR-1525 / URRWXCal2) (Rickettsia azadi).